Consider the following 287-residue polypeptide: Beta-lactamase GES-5 (287 aa).

The N-terminal stretch at 1-18 (MRFIHALLLAGIAHSAYA) is a signal peptide. Cysteine 63 and cysteine 233 are oxidised to a cystine. Serine 64 serves as the catalytic Nucleophile; acyl-ester intermediate. The imipenem site is built by serine 64, serine 125, asparagine 127, threonine 230, threonine 232, and arginine 238.

This sequence belongs to the class-A beta-lactamase family.

Its subcellular location is the secreted. It carries out the reaction a beta-lactam + H2O = a substituted beta-amino acid. Its activity is regulated as follows. Inhibited by the beta-lactamase-blocking agents clavulanic acid, sulbactam and tazobactam, via a covalent binding to Ser-64. Its function is as follows. Confers resistance to penicillins, cephalosporins and carbapenems. Has carbapenem-hydrolyzing activity. This chain is Beta-lactamase GES-5, found in Klebsiella pneumoniae.